A 162-amino-acid polypeptide reads, in one-letter code: Caveolin-2 (162 aa).

Residues M1 to R86 are Cytoplasmic-facing. Residues L87 to L107 constitute an intramembrane region (helical). At S108–T162 the chain is on the cytoplasmic side.

The protein belongs to the caveolin family. As to quaternary structure, homooligomer.

The protein resides in the golgi apparatus membrane. Its subcellular location is the cell membrane. It localises to the membrane. The protein localises to the caveola. Functionally, may act as a scaffolding protein within caveolar membranes. Interacts directly with G-protein alpha subunits and can functionally regulate their activity. This chain is Caveolin-2 (cav2), found in Takifugu rubripes (Japanese pufferfish).